We begin with the raw amino-acid sequence, 255 residues long: Electron transfer flavoprotein subunit beta (255 aa).

N-acetylalanine is present on Ala2. Residues Ala9, 39-42 (NPFC), Cys66, and 123-134 (GKQAIDDDCNQT) contribute to the AMP site. The tract at residues 183–205 (ADLRLNEPRYATLPNIMKAKKKK) is recognition loop. Lys200 is modified (N6,N6,N6-trimethyllysine; by ETFBKMT; alternate). Lys200 bears the N6-acetyllysine; alternate mark. At Lys200 the chain carries N6-methyllysine; alternate. Residue Lys203 is modified to N6,N6,N6-trimethyllysine; by ETFBKMT. N6-acetyllysine; alternate is present on Lys210. Position 210 is an N6-succinyllysine; alternate (Lys210). Phosphoserine occurs at positions 223 and 226. Residue Lys238 is modified to N6-acetyllysine. Lys248 carries the post-translational modification N6-acetyllysine; alternate. At Lys248 the chain carries N6-succinyllysine; alternate.

This sequence belongs to the ETF beta-subunit/FixA family. In terms of assembly, heterodimer composed of ETFA and ETFB. Identified in a complex that contains ETFA, ETFB and ETFRF1. Interacts with ACADM. Methylated. Trimethylation at Lys-200 and Lys-203 may negatively regulate the activity in electron transfer from acyl-CoA dehydrogenases.

It is found in the mitochondrion matrix. Functionally, heterodimeric electron transfer flavoprotein that accepts electrons from several mitochondrial dehydrogenases, including acyl-CoA dehydrogenases, glutaryl-CoA and sarcosine dehydrogenase. It transfers the electrons to the main mitochondrial respiratory chain via ETF-ubiquinone oxidoreductase. Required for normal mitochondrial fatty acid oxidation and normal amino acid metabolism. ETFB binds an AMP molecule that probably has a purely structural role. This is Electron transfer flavoprotein subunit beta from Pongo abelii (Sumatran orangutan).